The following is a 444-amino-acid chain: Phosphoglucosamine mutase (444 aa).

Residue Ser-102 is the Phosphoserine intermediate of the active site. Positions 102, 241, 243, and 245 each coordinate Mg(2+). Position 102 is a phosphoserine (Ser-102).

This sequence belongs to the phosphohexose mutase family. The cofactor is Mg(2+). Post-translationally, activated by phosphorylation.

It catalyses the reaction alpha-D-glucosamine 1-phosphate = D-glucosamine 6-phosphate. In terms of biological role, catalyzes the conversion of glucosamine-6-phosphate to glucosamine-1-phosphate. The polypeptide is Phosphoglucosamine mutase (Buchnera aphidicola subsp. Acyrthosiphon pisum (strain 5A)).